A 689-amino-acid polypeptide reads, in one-letter code: DNA polymerase epsilon subunit B (689 aa).

Positions 98–115 (EWSHEHPIQHEENILGRT) are enriched in basic and acidic residues. Residues 98 to 155 (EWSHEHPIQHEENILGRTDDDENNSDDEMPIAADSSLQNVSLSSPMRQPTERDEYKQP) form a disordered region. Over residues 116–126 (DDDENNSDDEM) the composition is skewed to acidic residues. The residue at position 122 (Ser122) is a Phosphoserine. The segment covering 132–144 (SSLQNVSLSSPMR) has biased composition (polar residues). Ser141 bears the Phosphoserine; by CDC28 mark. A compositionally biased stretch (basic and acidic residues) spans 146 to 155 (PTERDEYKQP). Ser613 carries the post-translational modification Phosphoserine.

It belongs to the DNA polymerase epsilon subunit B family. As to quaternary structure, DNA polymerase epsilon is a heterotetramer consisting of POL2, DPB2, DPB3 and DPB4. Post-translationally, phosphorylated in a cell cycle dependent manner during late G1 phase. Phosphorylation may facilitate the interaction with POL2 or the activity of DNA polymerase II. Phosphorylation is independent of DNA replication but dependent upon CDC28 in vivo. Both Ser-141 and Ser-613 are phosphorylated in vivo, but in vitro only Ser-141 is phosphorylated by CDC28.

It is found in the cytoplasm. Its subcellular location is the nucleus. Its function is as follows. As accessory component of the DNA polymerase epsilon complex participates in chromosomal DNA replication. It is required during synthesis of the leading and lagging DNA strands at the replication fork and binds at/or near replication origins and moves along DNA with the replication fork. It has 3'-5' proofreading exonuclease activity that correct errors arising during DNA replication. It is also involved in DNA synthesis during DNA repair. This chain is DNA polymerase epsilon subunit B (DPB2), found in Saccharomyces cerevisiae (strain ATCC 204508 / S288c) (Baker's yeast).